Here is a 240-residue protein sequence, read N- to C-terminus: Peptidyl-tRNA hydrolase (240 aa).

Tyr14 is a binding site for tRNA. His19 (proton acceptor) is an active-site residue. TRNA contacts are provided by Tyr64, Asn66, and Asn112. Positions 190–204 (KADEEKPRKDSEKKP) are enriched in basic and acidic residues. The interval 190-240 (KADEEKPRKDSEKKPAGQSHIRQARNNNQPKLPATGPMADMLKKMFGNKGE) is disordered. The segment covering 209–219 (HIRQARNNNQP) has biased composition (polar residues).

The protein belongs to the PTH family. In terms of assembly, monomer.

The protein resides in the cytoplasm. The catalysed reaction is an N-acyl-L-alpha-aminoacyl-tRNA + H2O = an N-acyl-L-amino acid + a tRNA + H(+). Hydrolyzes ribosome-free peptidyl-tRNAs (with 1 or more amino acids incorporated), which drop off the ribosome during protein synthesis, or as a result of ribosome stalling. In terms of biological role, catalyzes the release of premature peptidyl moieties from peptidyl-tRNA molecules trapped in stalled 50S ribosomal subunits, and thus maintains levels of free tRNAs and 50S ribosomes. The protein is Peptidyl-tRNA hydrolase of Rhizobium etli (strain ATCC 51251 / DSM 11541 / JCM 21823 / NBRC 15573 / CFN 42).